The following is a 437-amino-acid chain: Xylose isomerase (437 aa).

Catalysis depends on residues H102 and D105. Mg(2+)-binding residues include E233, E269, H272, D297, D308, D310, and D340.

Belongs to the xylose isomerase family. As to quaternary structure, homotetramer. Mg(2+) is required as a cofactor.

The protein resides in the cytoplasm. It catalyses the reaction alpha-D-xylose = alpha-D-xylulofuranose. In Novosphingobium aromaticivorans (strain ATCC 700278 / DSM 12444 / CCUG 56034 / CIP 105152 / NBRC 16084 / F199), this protein is Xylose isomerase.